Here is a 175-residue protein sequence, read N- to C-terminus: NADH-ubiquinone oxidoreductase chain 6 (175 aa).

The next 5 helical transmembrane spans lie at 1–21, 27–47, 49–69, 88–108, and 149–169; these read MMTYIVFILSTVFVVGFVGFS, VYGGVGLIVSGGVGCGIIMNF, GSFLGLMVFLIYLGGMMVVFG, VVFGAFVFGLFMEMLLVLYVL, and YGMWLVVVTGWSLFIAVVVVM.

This sequence belongs to the complex I subunit 6 family. As to quaternary structure, core subunit of respiratory chain NADH dehydrogenase (Complex I) which is composed of 45 different subunits.

It localises to the mitochondrion inner membrane. The enzyme catalyses a ubiquinone + NADH + 5 H(+)(in) = a ubiquinol + NAD(+) + 4 H(+)(out). Its function is as follows. Core subunit of the mitochondrial membrane respiratory chain NADH dehydrogenase (Complex I) which catalyzes electron transfer from NADH through the respiratory chain, using ubiquinone as an electron acceptor. Essential for the catalytic activity and assembly of complex I. This Pteropus scapulatus (Little red flying fox) protein is NADH-ubiquinone oxidoreductase chain 6 (MT-ND6).